The following is a 650-amino-acid chain: Threonine--tRNA ligase (650 aa).

The TGS domain occupies 1–66; it reads MVQITLPDGS…EHDAQLAIVT (66 aa). Positions 247-538 are catalytic; the sequence is DHRKIGRDLD…LIENHAGAMP (292 aa). Positions 338, 389, and 515 each coordinate Zn(2+).

Belongs to the class-II aminoacyl-tRNA synthetase family. Homodimer. It depends on Zn(2+) as a cofactor.

It localises to the cytoplasm. It carries out the reaction tRNA(Thr) + L-threonine + ATP = L-threonyl-tRNA(Thr) + AMP + diphosphate + H(+). Its function is as follows. Catalyzes the attachment of threonine to tRNA(Thr) in a two-step reaction: L-threonine is first activated by ATP to form Thr-AMP and then transferred to the acceptor end of tRNA(Thr). Also edits incorrectly charged L-seryl-tRNA(Thr). The chain is Threonine--tRNA ligase from Bordetella petrii (strain ATCC BAA-461 / DSM 12804 / CCUG 43448).